A 644-amino-acid chain; its full sequence is Exoribonuclease 2 (644 aa).

One can recognise an RNB domain in the interval 189–516 (REDLTALDFV…NHRLLKAVIK (328 aa)). An S1 motif domain is found at 561–643 (DTRFAAEIVD…ETRSIIARPV (83 aa)).

The protein belongs to the RNR ribonuclease family. RNase II subfamily.

It localises to the cytoplasm. The enzyme catalyses Exonucleolytic cleavage in the 3'- to 5'-direction to yield nucleoside 5'-phosphates.. Involved in mRNA degradation. Hydrolyzes single-stranded polyribonucleotides processively in the 3' to 5' direction. This Shigella dysenteriae serotype 1 (strain Sd197) protein is Exoribonuclease 2.